The primary structure comprises 432 residues: Adenylosuccinate synthetase (432 aa).

GTP-binding positions include 13–19 (GDEGKGK) and 41–43 (GHT). Aspartate 14 acts as the Proton acceptor in catalysis. 2 residues coordinate Mg(2+): aspartate 14 and glycine 41. Residues 14 to 17 (DEGK), 39 to 42 (NAGH), threonine 130, arginine 144, glutamine 225, threonine 240, and arginine 304 contribute to the IMP site. The active-site Proton donor is histidine 42. 300–306 (ATTGRSR) provides a ligand contact to substrate. Residues arginine 306, 332-334 (KLD), and 415-417 (STG) each bind GTP.

The protein belongs to the adenylosuccinate synthetase family. In terms of assembly, homodimer. The cofactor is Mg(2+).

It localises to the cytoplasm. The catalysed reaction is IMP + L-aspartate + GTP = N(6)-(1,2-dicarboxyethyl)-AMP + GDP + phosphate + 2 H(+). It functions in the pathway purine metabolism; AMP biosynthesis via de novo pathway; AMP from IMP: step 1/2. Functionally, plays an important role in the de novo pathway of purine nucleotide biosynthesis. Catalyzes the first committed step in the biosynthesis of AMP from IMP. The protein is Adenylosuccinate synthetase of Marinomonas sp. (strain MWYL1).